Reading from the N-terminus, the 252-residue chain is Iron-sulfur cluster co-chaperone protein HscB homolog (252 aa).

A mitochondrion-targeting transit peptide spans 1 to 59; sequence MKKTKTMVASISTLIRRTYPSTNQCNSLATIQSQTQLPRESLQHHSSAEGRLRFSGRVF. One can recognise a J domain in the interval 93-165; sequence DYFQIFGLEK…LSRAMYIMKL (73 aa).

It belongs to the HscB family. In terms of assembly, interacts with ISU1 and HSP70-9/HSCA1.

The protein resides in the mitochondrion. Its subcellular location is the cytoplasm. It localises to the cytosol. Functionally, co-chaperone required for the assembly of iron-sulfur [Fe-S] clusters in both mitochondria and cytosol. Required for the activity of iron-sulfur proteins such as aconitase and succinate dehydrogenase. Involved in iron homeostasis and may take part in the control of iron translocation from roots to shoots. This is Iron-sulfur cluster co-chaperone protein HscB homolog from Arabidopsis thaliana (Mouse-ear cress).